A 152-amino-acid polypeptide reads, in one-letter code: UPF0311 protein blr7842 (152 aa).

Belongs to the UPF0311 family.

In Bradyrhizobium diazoefficiens (strain JCM 10833 / BCRC 13528 / IAM 13628 / NBRC 14792 / USDA 110), this protein is UPF0311 protein blr7842.